The primary structure comprises 239 residues: MKIDILTLFPEMFSPLEHSIVGKAREKGLLDIQYHNFRENAEKARHVDDEPYGGGQGMLLRAQPIFDSFDAIEKKNPRVILLDPAGKQFDQAYAEDLAQEEELIFICGHYEGYDERIKTLVTDEISLGDYVLTGGELAAMTMIDATVRLIPEVIGKESSHQDDSFSSGLLEYPQYTRPYDYRGMVVPDVLMSGHHEKIRQWRLYESLKKTYERRPDLLEHYQLTVEEEKMLAEIKENKE.

Residues Gly-108 and 127 to 132 (LGDYVL) each bind S-adenosyl-L-methionine.

It belongs to the RNA methyltransferase TrmD family. Homodimer.

The protein resides in the cytoplasm. It catalyses the reaction guanosine(37) in tRNA + S-adenosyl-L-methionine = N(1)-methylguanosine(37) in tRNA + S-adenosyl-L-homocysteine + H(+). Specifically methylates guanosine-37 in various tRNAs. This chain is tRNA (guanine-N(1)-)-methyltransferase, found in Streptococcus pneumoniae serotype 19F (strain G54).